We begin with the raw amino-acid sequence, 159 residues long: MTDTQAGTTTQTQVVIYTDGACKGNPGPGGWGVLLAMGDTEKELFGGEPVTTNNRMEMTAVIEALAALKRPCRVTLYLDSEYVRKGITEWIHGWKARGWRTAAKAPVKNVDLWQRLDALVTSSGHKIDWRWVKGHNGDPGNERADALANQGVERALGRR.

Residues 10-153 enclose the RNase H type-1 domain; that stretch reads TQTQVVIYTD…ADALANQGVE (144 aa). Asp-19, Glu-57, Asp-79, and Asp-145 together coordinate Mg(2+).

The protein belongs to the RNase H family. In terms of assembly, monomer. Requires Mg(2+) as cofactor.

It is found in the cytoplasm. The catalysed reaction is Endonucleolytic cleavage to 5'-phosphomonoester.. Endonuclease that specifically degrades the RNA of RNA-DNA hybrids. The chain is Ribonuclease H from Polaromonas sp. (strain JS666 / ATCC BAA-500).